Here is a 460-residue protein sequence, read N- to C-terminus: Cysteine proteinase 7 (460 aa).

A signal peptide spans 1-17; that stretch reads MKVLSALCVLLVSVATA. The propeptide at 18–111 is activation peptide; the sequence is KQQLSEVEYR…TESDKIFDAS (94 aa). 2 cysteine pairs are disulfide-bonded: Cys131–Cys176 and Cys167–Cys210. The active site involves Cys134. N-linked (GlcNAc...) asparagine glycosylation is found at Asn226 and Asn252. Residues Cys268 and Cys445 are joined by a disulfide bond. His275 is a catalytic residue. The tract at residues 285 to 409 is disordered; that stretch reads GSGSSGSHGG…GSSSGSNSNG (125 aa). A compositionally biased stretch (low complexity) spans 294-359; it reads GSQSQSAGSD…QSGSQSGNSG (66 aa). Residues 367–385 are compositionally biased toward gly residues; it reads AGSGSGSGSGSGSGSGSGS. Residues 386–409 show a composition bias toward low complexity; the sequence is VSGSASGSASGSASGSSSGSNSNG. Asn423 is a catalytic residue.

Belongs to the peptidase C1 family. Glycosylated; contains GlcNAc-alpha-1-P-Ser residues. Also N-glycosylated.

It localises to the lysosome. The polypeptide is Cysteine proteinase 7 (cprG) (Dictyostelium discoideum (Social amoeba)).